Reading from the N-terminus, the 421-residue chain is MKKHSARVAPLSACNSPVLTLTKVEGEERPREPPGPAEAQAPAGTEAGGRTSRHNWTCSQERLKKVFWGVAVVFCVCASWAGSTQLARLTFKTFDAPFTLTWFATNWNFLFFPLYYAGHVCKSTEKQSMKQRYRECCRFFGDNGLTLKVFFTKAAPFGVLWTLTNYLYLHAIKKINATDVSVLFCCNKSFVFLLSWIVLRDRFMGVRIVAAILAIAGIVMMTYADGFHSHSVIGIALVVGSASMSALYKVLFKLLLGSAKFGEAALFLSILGVFNILFITCIPVILYFTRVEYWNSFDDIPWGNLCGFSILLLTFNIVLNFGIAVTYPTLMSLGIVLSVPVNAVVDHYTSQIVFNGVRVIAIIIIGLGFLLLLLPEEWDVWLIKLLTRLKVRKKEETAESSGDLGTGPQSRSRRARPSFAR.

Residues 25–53 (EGEERPREPPGPAEAQAPAGTEAGGRTSR) form a disordered region. Over residues 37 to 49 (AEAQAPAGTEAGG) the composition is skewed to low complexity. 10 helical membrane-spanning segments follow: residues 66 to 86 (VFWG…STQL), 98 to 118 (FTLT…YYAG), 149 to 169 (VFFT…YLYL), 179 to 199 (DVSV…WIVL), 208 to 228 (IVAA…DGFH), 232 to 252 (VIGI…KVLF), 266 to 286 (LFLS…PVIL), 305 to 325 (LCGF…GIAV), 326 to 346 (TYPT…AVVD), and 352 to 372 (IVFN…FLLL). The disordered stretch occupies residues 394 to 421 (KEETAESSGDLGTGPQSRSRRARPSFAR). Positions 411–421 (RSRRARPSFAR) are enriched in basic residues.

This sequence belongs to the SLC35F solute transporter family.

It localises to the membrane. It catalyses the reaction thiamine(in) = thiamine(out). Its function is as follows. Mediates thiamine transport. The chain is Solute carrier family 35 member F3 (Slc35f3) from Mus musculus (Mouse).